A 183-amino-acid chain; its full sequence is Large ribosomal subunit protein uL22 (183 aa).

Residues 163–183 (KTAAKKQSAKKLKKQKMMYRE) are disordered. Basic residues predominate over residues 165-183 (AAKKQSAKKLKKQKMMYRE).

It belongs to the universal ribosomal protein uL22 family.

This is Large ribosomal subunit protein uL22 (rpl-17) from Pectinaria gouldii (Trumpet worm).